Consider the following 1060-residue polypeptide: MELWAPQRLPQTRGKATAPSKDPDRGFRRDGHHRPVPHSWHNGERFHQWQDNRGSPQPQQEPRADHQQQPHYASRPGDWHQPVSGVDYYEGGYRNQLYSRPGYENSYQSYQSPTMREEYAYGSYYYHGHPQWLQEERVPRQRSPYIWHEDYREQKYLDEHHYENQHSPFGTNSETHFQSNSRNPCKDSPASNSGQEWPGELFPGSLLAEAQKNKPSLASESNLLQQRESGLSSSSYELSQYIRDAPERDDPPASAAWSPVQADVSSAGPKAPMKFYIPHVPVSFGPGGQLVHVGPSSPTDGQAALVELHSMEVILNDSEEQEEMRSFSGPLIREDVHKVDIMTFCQQKAAQSCKSETLGSRDSALLWQLLVLLCRQNGSMVGSDIAELLMQDCKKLEKYKRQPPVANLINLTDEDWPVLSSGTPNLLTGEIPPSVETPAQIVEKFTRLLYYGRKKEALEWAMKNHLWGHALFLSSKMDPQTYSWVMSGFTSTLALNDPLQTLFQLMSGRIPQAATCCGEKQWGDWRPHLAVILSNQAGDPELYQRAIVAIGDTLAGKGLVEAAHFCYLMAHVPFGHYTVKTDHLVLLGSSHSQEFLKFATTEAIQRTEIFEYCQMLGRPKSFIPSFQVYKLLYASRLADYGLVSQALHYCEAIGAAVLSQGESSHPVLLVELIKLAEKLKLSDPLVLERRSGDRDLEPDWLAQLRRQLEQKVAGDIGDPHPTRSDISGAGGTTTENTFYQDFSGCQGYSEAPGYRSALWLTPEQTCLLQPSPQQPFPLQPGSYPAGGGAGQTGTPRPFYSVPETHLPGTGSSVAVTEATGGTVWEEMLQTHLGPGENTVSQETSQPPDGQEVISKPQTPLAARPRSISESSASSAKEDEKESSDEADKNSPRNTAQRGKLGDGKEHTKSSGFGWFSWFRSKPTKNASPAGDEDSSDSPDSEETPRASSPHQAGLGLSLTPSPESPPLPDVSAFSRGRGGGEGRGSASSGGAAAGAGVGGLSGPESVSFELCSNPGVLLPPPALKGAVPLYNPSQVPQLPTATSLNRPNRLAQRRYPTQPC.

Positions 1 to 86 are disordered; it reads MELWAPQRLP…GDWHQPVSGV (86 aa). A required for endoplasmic reticulum localization region spans residues 34-224; it reads RPVPHSWHNG…PSLASESNLL (191 aa). The span at 41 to 50 shows a compositional bias: basic and acidic residues; it reads HNGERFHQWQ. Over residues 51–60 the composition is skewed to polar residues; that stretch reads DNRGSPQPQQ. Phosphoserine is present on residues serine 55, serine 143, serine 167, serine 188, and serine 191. 5 disordered regions span residues 163–236, 245–264, 711–733, 770–796, and 834–1060; these read ENQH…SSSY, APER…QADV, KVAG…GGTT, PSPQ…GTPR, and PGEN…TQPC. Polar residues-rich tracts occupy residues 165–195 and 213–222; these read QHSP…NSGQ and NKPSLASESN. A compositionally biased stretch (low complexity) spans 223-236; the sequence is LLQQRESGLSSSSY. A phosphoserine mark is found at serine 254 and serine 258. The segment at 271 to 713 is central conserved domain (CCD); required for localization to endoplasmic reticulum exit sites; sequence APMKFYIPHV…LRRQLEQKVA (443 aa). The span at 837-847 shows a compositional bias: polar residues; it reads NTVSQETSQPP. The residue at position 858 (threonine 858) is a Phosphothreonine. Serine 868, serine 871, serine 874, serine 882, and serine 883 each carry phosphoserine. Composition is skewed to basic and acidic residues over residues 875–890 and 899–908; these read AKED…DKNS and KLGDGKEHTK. Low complexity predominate over residues 909-918; sequence SSGFGWFSWF. Residues 930–941 show a composition bias toward acidic residues; sequence GDEDSSDSPDSE. Residues 991–1001 are compositionally biased toward gly residues; sequence AAAGAGVGGLS. A compositionally biased stretch (polar residues) spans 1031–1046; that stretch reads NPSQVPQLPTATSLNR.

It belongs to the SEC16 family. In terms of assembly, SEC16A and SEC16B are each present in multiple copies in a heteromeric complex. Interacts with TFG. Interacts with SEC13. Ubiquitous.

The protein localises to the endoplasmic reticulum membrane. The protein resides in the golgi apparatus membrane. Its function is as follows. Plays a role in the organization of the endoplasmic reticulum exit sites (ERES), also known as transitional endoplasmic reticulum (tER). Required for secretory cargo traffic from the endoplasmic reticulum to the Golgi apparatus. Involved in peroxisome biogenesis. Regulates the transport of peroxisomal biogenesis factors PEX3 and PEX16 from the ER to peroxisomes. This Homo sapiens (Human) protein is Protein transport protein Sec16B (SEC16B).